A 903-amino-acid polypeptide reads, in one-letter code: HTH-type transcriptional regulator MalT (903 aa).

An ATP-binding site is contributed by 39 to 46 (CPAGYGKT). Positions 832-897 (ELIRTSPLTQ…EAVQQAQRLL (66 aa)) constitute an HTH luxR-type domain. The H-T-H motif DNA-binding region spans 856–875 (NDQIANELDVAATTIKTHIR).

It belongs to the MalT family. Monomer in solution. Oligomerizes to an active state in the presence of the positive effectors ATP and maltotriose.

Its activity is regulated as follows. Activated by ATP and maltotriose, which are both required for DNA binding. Functionally, positively regulates the transcription of the maltose regulon whose gene products are responsible for uptake and catabolism of malto-oligosaccharides. Specifically binds to the promoter region of its target genes, recognizing a short DNA motif called the MalT box. The polypeptide is HTH-type transcriptional regulator MalT (Yersinia pseudotuberculosis serotype O:1b (strain IP 31758)).